The chain runs to 219 residues: Mediator of RNA polymerase II transcription subunit 20b (219 aa).

Belongs to the Mediator complex subunit 20 family. As to quaternary structure, component of the Mediator complex.

The protein localises to the nucleus. Component of the Mediator complex, a coactivator involved in the regulated transcription of nearly all RNA polymerase II-dependent genes. Mediator functions as a bridge to convey information from gene-specific regulatory proteins to the basal RNA polymerase II transcription machinery. The Mediator complex, having a compact conformation in its free form, is recruited to promoters by direct interactions with regulatory proteins and serves for the assembly of a functional preinitiation complex with RNA polymerase II and the general transcription factors. The protein is Mediator of RNA polymerase II transcription subunit 20b (MED20B) of Arabidopsis thaliana (Mouse-ear cress).